Here is a 971-residue protein sequence, read N- to C-terminus: uncharacterized protein (971 aa).

The N-terminal stretch at 1–24 (MQSNLLKVLGVLAIVATLVCFIFA) is a signal peptide. The tract at residues 127 to 146 (RTRPGKSNLDDSGQMIPIPR) is disordered. 6 helical membrane-spanning segments follow: residues 611–631 (IKAILILYVMTYGAMFLLGFA), 721–741 (LGLSGIIYFIITFIAICIVII), 753–773 (AFMATCILIGIAPLFISFLLF), 795–815 (VVMMAGIIVLTQLFTIYLDFV), 832–852 (FIGTILPIALLNVPIFCINWF), and 865–885 (GVNMQNIVALVIIAYGMYGYV). The disordered stretch occupies residues 933-971 (TGRAKSRLEQRNRTLEHAEQNSKKYKKRIGENTNEETLK). The span at 938 to 954 (SRLEQRNRTLEHAEQNS) shows a compositional bias: basic and acidic residues.

Belongs to the TrbL/VirB6 family.

It localises to the cell membrane. This is an uncharacterized protein from Rickettsia prowazekii (strain Madrid E).